A 501-amino-acid chain; its full sequence is Oxygen-independent coproporphyrinogen-III oxidase-like protein HemZ (501 aa).

The region spanning 163-405 is the Radical SAM core domain; that stretch reads DLYRVKDEVS…VAWTKEHGYV (243 aa). An S-adenosyl-L-methionine-binding site is contributed by Tyr-174. [4Fe-4S] cluster contacts are provided by Cys-180 and Cys-184. Tyr-186 lines the S-adenosyl-L-methionine pocket. Residue Cys-187 coordinates [4Fe-4S] cluster. Residues Gly-233, 234–235, Glu-267, Gln-295, Arg-307, and Asp-332 each bind S-adenosyl-L-methionine; that span reads GT.

It belongs to the anaerobic coproporphyrinogen-III oxidase family. HemZ subfamily. The cofactor is [4Fe-4S] cluster.

Its pathway is porphyrin-containing compound metabolism; protoporphyrin-IX biosynthesis. In terms of biological role, involved in the biosynthesis of porphyrin-containing compound. The protein is Oxygen-independent coproporphyrinogen-III oxidase-like protein HemZ (hemZ) of Bacillus subtilis (strain 168).